The chain runs to 379 residues: Lipid-A-disaccharide synthase (379 aa).

The protein belongs to the LpxB family.

It carries out the reaction a lipid X + a UDP-2-N,3-O-bis[(3R)-3-hydroxyacyl]-alpha-D-glucosamine = a lipid A disaccharide + UDP + H(+). It functions in the pathway bacterial outer membrane biogenesis; LPS lipid A biosynthesis. Its function is as follows. Condensation of UDP-2,3-diacylglucosamine and 2,3-diacylglucosamine-1-phosphate to form lipid A disaccharide, a precursor of lipid A, a phosphorylated glycolipid that anchors the lipopolysaccharide to the outer membrane of the cell. The polypeptide is Lipid-A-disaccharide synthase (Pseudomonas fluorescens (strain SBW25)).